Here is a 330-residue protein sequence, read N- to C-terminus: Ferrochelatase (330 aa).

2 residues coordinate Fe cation: histidine 200 and glutamate 281.

The protein belongs to the ferrochelatase family.

The protein resides in the cytoplasm. The catalysed reaction is heme b + 2 H(+) = protoporphyrin IX + Fe(2+). It participates in porphyrin-containing compound metabolism; protoheme biosynthesis; protoheme from protoporphyrin-IX: step 1/1. Catalyzes the ferrous insertion into protoporphyrin IX. The polypeptide is Ferrochelatase (Marinomonas sp. (strain MWYL1)).